Consider the following 140-residue polypeptide: MKMFKSLSLLPRNVSPFQKCYSTDLISLVGVPRVKITKGQNRYLLVNIHTHGFTKYGRVIVRGADVDNHLTIFDSILEELEPQGICAKILGGGRILNEADSKKMKIYGTSRTFGSADHTRTRNILQSWTTYKDFKISVKN.

Arg42 provides a ligand contact to substrate. Catalysis depends on His69, which acts as the Proton acceptor. 110–112 (SRT) contributes to the substrate binding site.

It belongs to the janus family.

Its function is as follows. JanA and janB regulate somatic sex differentiation. In Drosophila orena (Fruit fly), this protein is Sex-regulated protein janus-B (janB).